We begin with the raw amino-acid sequence, 321 residues long: Tetraacyldisaccharide 4'-kinase (321 aa).

54–61 (SVGGTGKT) lines the ATP pocket.

Belongs to the LpxK family.

The enzyme catalyses a lipid A disaccharide + ATP = a lipid IVA + ADP + H(+). Its pathway is glycolipid biosynthesis; lipid IV(A) biosynthesis; lipid IV(A) from (3R)-3-hydroxytetradecanoyl-[acyl-carrier-protein] and UDP-N-acetyl-alpha-D-glucosamine: step 6/6. Transfers the gamma-phosphate of ATP to the 4'-position of a tetraacyldisaccharide 1-phosphate intermediate (termed DS-1-P) to form tetraacyldisaccharide 1,4'-bis-phosphate (lipid IVA). This is Tetraacyldisaccharide 4'-kinase from Rickettsia bellii (strain OSU 85-389).